The chain runs to 290 residues: Diaminopimelate epimerase (290 aa).

Positions 11 and 78 each coordinate substrate. Cys87 (proton donor) is an active-site residue. Residues 88 to 89, Asn163, Asn199, and 217 to 218 contribute to the substrate site; these read GN and ER. The active-site Proton acceptor is the Cys226. 227–228 contributes to the substrate binding site; the sequence is GT.

Belongs to the diaminopimelate epimerase family. Homodimer.

The protein resides in the cytoplasm. The catalysed reaction is (2S,6S)-2,6-diaminopimelate = meso-2,6-diaminopimelate. The protein operates within amino-acid biosynthesis; L-lysine biosynthesis via DAP pathway; DL-2,6-diaminopimelate from LL-2,6-diaminopimelate: step 1/1. In terms of biological role, catalyzes the stereoinversion of LL-2,6-diaminopimelate (L,L-DAP) to meso-diaminopimelate (meso-DAP), a precursor of L-lysine and an essential component of the bacterial peptidoglycan. This chain is Diaminopimelate epimerase, found in Mycobacterium ulcerans (strain Agy99).